Reading from the N-terminus, the 420-residue chain is MKLSAPLLVSLAAFSQAVTALVAFPGAEGFGANAIGGRNGQVYVVTNLNDSGTGSLRDAVSATDRIVVFAVGGVIKISDRIVVSKRVTILGQTAPGDGITVYGNGWSFSNADDAIVRYIRIRMGKGGSSGKDALGIAEGNRMIFDHVSVSWGRDETFSINGDASNITVQNSIIAQGLETHSCGGLMQTDGGVSLFRNLYIDNKTRNPKVKGVNEFTNNVVYNWGGGGGYIAGDSAGQSYANIIGNYFISGPSTSVTAFTRGNANFHGYVQNNYYDPDKDGQLDGFELGVSSSNYGGVAIMSSKYNYPAVAYTMSPAEAVTYVTKYAGASKVRDSVDTQLIAQVQSWGTEGGLISDEATMGGPGTLNGGTPAKDTDGDGIPDEAEKQLGTDPNTNDSMKLHSSGYTYLEVWANSLVPSTYH.

Residues 1–20 (MKLSAPLLVSLAAFSQAVTA) form the signal peptide. N-linked (GlcNAc...) asparagine glycosylation is found at Asn-49, Asn-165, and Asn-202. Arg-205 is a catalytic residue. Residues 262–297 (NANFHGYVQNNYYDPDKDGQLDGFELGVSSSNYGGV) form the EF-hand domain. Residues Asp-275, Asp-277, Asp-279, Gln-281, and Glu-286 each contribute to the Ca(2+) site. The interval 358–396 (TMGGPGTLNGGTPAKDTDGDGIPDEAEKQLGTDPNTNDS) is disordered. An N-linked (GlcNAc...) asparagine glycan is attached at Asn-394.

It belongs to the polysaccharide lyase 1 family. Requires Ca(2+) as cofactor.

The protein localises to the secreted. The enzyme catalyses Eliminative cleavage of (1-&gt;4)-alpha-D-galacturonan to give oligosaccharides with 4-deoxy-alpha-D-galact-4-enuronosyl groups at their non-reducing ends.. Its function is as follows. Pectinolytic enzyme consist of four classes of enzymes: pectin lyase, polygalacturonase, pectin methylesterase and rhamnogalacturonase. Among pectinolytic enzymes, pectin lyase is the most important in depolymerization of pectin, since it cleaves internal glycosidic bonds of highly methylated pectins. Favors pectate, the anion, over pectin, the methyl ester. The chain is Probable pectate lyase C (plyC) from Aspergillus fumigatus (strain CBS 144.89 / FGSC A1163 / CEA10) (Neosartorya fumigata).